We begin with the raw amino-acid sequence, 127 residues long: Small ribosomal subunit protein uS13 (127 aa).

Residues 96–127 (LPCHGQRTSTNARTRKGPKRTAVKKKGAAKKK) form a disordered region. Over residues 108–127 (RTRKGPKRTAVKKKGAAKKK) the composition is skewed to basic residues.

This sequence belongs to the universal ribosomal protein uS13 family. As to quaternary structure, part of the 30S ribosomal subunit. Forms a loose heterodimer with protein S19. Forms two bridges to the 50S subunit in the 70S ribosome.

Functionally, located at the top of the head of the 30S subunit, it contacts several helices of the 16S rRNA. In the 70S ribosome it contacts the 23S rRNA (bridge B1a) and protein L5 of the 50S subunit (bridge B1b), connecting the 2 subunits; these bridges are implicated in subunit movement. Contacts the tRNAs in the A and P-sites. In Desulfosudis oleivorans (strain DSM 6200 / JCM 39069 / Hxd3) (Desulfococcus oleovorans), this protein is Small ribosomal subunit protein uS13.